A 206-amino-acid polypeptide reads, in one-letter code: Protein sym1 (206 aa).

A run of 2 helical transmembrane segments spans residues 107–127 (VLLD…SWMT) and 169–189 (LQYQ…FLSL).

It belongs to the peroxisomal membrane protein PXMP2/4 family.

The protein localises to the mitochondrion inner membrane. This chain is Protein sym1 (sym1), found in Schizosaccharomyces pombe (strain 972 / ATCC 24843) (Fission yeast).